We begin with the raw amino-acid sequence, 493 residues long: MVLHVYNTLTKSKEEFIPLEPGKVKFYVCGVTVYDLSHIGHARSAIVFDVIYRYLRFLGFEVTYVRNFTDVDDKIIRRANDAGTDCRSIAQRYIAAFYEDMDALGVLRPDLEPLATENVPGMIEIIRVLMDKGIAYQAGADVFFEIEKFPGYGKLSGRQIEDMLAGARVEVDARKRNPLDFVLWKGSKPGEPSWDSPWGPGRPGWHIECSAMGSRFLGKTFDIHGGGKDLIFPHHENEIAQSEAAFGMPFVRYWLHNGFVNINNEKMSKSLGNFLTIRDVLQKVHPETVRFFVLSKHYRSPVDFSDETIGEAEKGLERLYGTLGAVKERAAAGVEEAFQEKALRGQDPELFDQIAALSGAFREAMDNDFNTAQALGNLFSLQRHLQRFLDKFGRKQLKGPASALARAGADAIRDHALVLGLLTREPEAFQAEQRSLKIKSTGLTEAEVERCIELRRQARQDKNFAEADRLREEIEKKGIQLEDSPAGTRWRVG.

A Zn(2+)-binding site is contributed by Cys29. The short motif at 31-41 (VTVYDLSHIGH) is the 'HIGH' region element. The Zn(2+) site is built by Cys209, His234, and Glu238. A 'KMSKS' region motif is present at residues 266–270 (KMSKS). Lys269 serves as a coordination point for ATP.

The protein belongs to the class-I aminoacyl-tRNA synthetase family. Monomer. It depends on Zn(2+) as a cofactor.

It is found in the cytoplasm. It catalyses the reaction tRNA(Cys) + L-cysteine + ATP = L-cysteinyl-tRNA(Cys) + AMP + diphosphate. The sequence is that of Cysteine--tRNA ligase from Syntrophobacter fumaroxidans (strain DSM 10017 / MPOB).